Reading from the N-terminus, the 528-residue chain is Bifunctional pantoate ligase/cytidylate kinase (528 aa).

The interval 1–293 (MRLFTTIAGL…IGSCRLIDNI (293 aa)) is pantoate--beta-alanine ligase. 34–41 (MGALHKGH) contacts ATP. Residue H41 is the Proton donor of the active site. Position 65 (Q65) interacts with (R)-pantoate. Beta-alanine is bound at residue Q65. Position 160 to 163 (160 to 163 (GQKD)) interacts with ATP. Q166 lines the (R)-pantoate pocket. ATP-binding positions include I189 and 197–200 (ISSR). The tract at residues 294–528 (LLRNRKPIIA…YGKSSVNNII (235 aa)) is cytidylate kinase.

This sequence in the N-terminal section; belongs to the pantothenate synthetase family. It in the C-terminal section; belongs to the cytidylate kinase family. Type 1 subfamily.

The protein localises to the cytoplasm. The enzyme catalyses (R)-pantoate + beta-alanine + ATP = (R)-pantothenate + AMP + diphosphate + H(+). It catalyses the reaction CMP + ATP = CDP + ADP. The catalysed reaction is dCMP + ATP = dCDP + ADP. Its pathway is cofactor biosynthesis; (R)-pantothenate biosynthesis; (R)-pantothenate from (R)-pantoate and beta-alanine: step 1/1. Catalyzes the condensation of pantoate with beta-alanine in an ATP-dependent reaction via a pantoyl-adenylate intermediate. Functionally, catalyzes the transfer of a phosphate group from ATP to either CMP or dCMP to form CDP or dCDP and ADP, respectively. The chain is Bifunctional pantoate ligase/cytidylate kinase from Trichodesmium erythraeum (strain IMS101).